Consider the following 255-residue polypeptide: tRNA uridine(34) hydroxylase (255 aa).

The Rhodanese domain maps to 131–225 (AAPDTLVLDT…YLEEVPEAQS (95 aa)). Catalysis depends on Cys-185, which acts as the Cysteine persulfide intermediate.

Belongs to the TrhO family.

It catalyses the reaction uridine(34) in tRNA + AH2 + O2 = 5-hydroxyuridine(34) in tRNA + A + H2O. Functionally, catalyzes oxygen-dependent 5-hydroxyuridine (ho5U) modification at position 34 in tRNAs. This is tRNA uridine(34) hydroxylase from Bradyrhizobium diazoefficiens (strain JCM 10833 / BCRC 13528 / IAM 13628 / NBRC 14792 / USDA 110).